The chain runs to 446 residues: Kynurenine 3-monooxygenase (446 aa).

Belongs to the aromatic-ring hydroxylase family. KMO subfamily. FAD serves as cofactor.

It catalyses the reaction L-kynurenine + NADPH + O2 + H(+) = 3-hydroxy-L-kynurenine + NADP(+) + H2O. It functions in the pathway cofactor biosynthesis; NAD(+) biosynthesis; quinolinate from L-kynurenine: step 1/3. Catalyzes the hydroxylation of L-kynurenine (L-Kyn) to form 3-hydroxy-L-kynurenine (L-3OHKyn). Required for synthesis of quinolinic acid. The protein is Kynurenine 3-monooxygenase of Flavobacterium johnsoniae (strain ATCC 17061 / DSM 2064 / JCM 8514 / BCRC 14874 / CCUG 350202 / NBRC 14942 / NCIMB 11054 / UW101) (Cytophaga johnsonae).